We begin with the raw amino-acid sequence, 309 residues long: Phytoene synthase (309 aa).

The protein belongs to the phytoene/squalene synthase family. ATP is required as a cofactor. The cofactor is Mn(2+). Mg(2+) serves as cofactor.

It participates in carotenoid biosynthesis; phytoene biosynthesis. Functionally, involved in the biosynthesis of carotenoids. Catalyzes the condensation of two molecules of geranylgeranyl diphosphate (GGPP) to give prephytoene diphosphate (PPPP) and the subsequent rearrangement of the cyclopropylcarbinyl intermediate to yield phytoene. The polypeptide is Phytoene synthase (crtB) (Pseudescherichia vulneris (Escherichia vulneris)).